The primary structure comprises 312 residues: MKALWAVLLVTLLAGCLAEGEPEVTDQLEWQSSQPWEQALNRFWDYLRWVQTLSDQVQEELQSSQVTQELTVLMEDTMTEVKAYKKELEEQLGPVAEETRARLAKEVQAAQARLGADMEDLRNRLGQYRNEVHTMLGQSTEEIRARLSTHLRKMRKRLMRDAEDLQKRLAVYKAGAREGAERGVSALRERLGPLVEQGRQRTANLGAGAAQPLRDRAQAFGDRIRGRLEEVGNQARDRLEEVREHMEEVRSKMEEQTQQIRLQAEIFQARLKGWFEPIVEDMHRQWANLMEKIQASVATNPIISTPMPQENQ.

The first 18 residues, 1 to 18, serve as a signal peptide directing secretion; that stretch reads MKALWAVLLVTLLAGCLA. 8 consecutive repeat copies span residues 72–93, 94–115, 116–137, 138–159, 160–181, 182–203, 204–225, and 226–247. The tract at residues 72–247 is 8 X 22 AA approximate tandem repeats; that stretch reads VLMEDTMTEV…RLEEVREHME (176 aa). Methionine 135 carries the methionine sulfoxide modification. The residue at position 139 (serine 139) is a Phosphoserine. The LDL and other lipoprotein receptors binding stretch occupies residues 150-160; that stretch reads HLRKMRKRLMR. 154-157 is a binding site for heparin; that stretch reads MRKR. The lipid-binding and lipoprotein association stretch occupies residues 202–282; sequence TANLGAGAAQ…GWFEPIVEDM (81 aa). 221–228 contributes to the heparin binding site; that stretch reads GDRIRGRL. The homooligomerization stretch occupies residues 258–312; that stretch reads QQIRLQAEIFQARLKGWFEPIVEDMHRQWANLMEKIQASVATNPIISTPMPQENQ. Residues 270–282 form a specificity for association with VLDL region; the sequence is RLKGWFEPIVEDM.

Belongs to the apolipoprotein A1/A4/E family. In terms of assembly, homotetramer. May interact with ABCA1; functionally associated with ABCA1 in the biogenesis of HDLs. May interact with APP/A4 amyloid-beta peptide; the interaction is extremely stable in vitro but its physiological significance is unclear. May interact with MAPT. May interact with MAP2. In the cerebrospinal fluid, interacts with secreted SORL1. Interacts with PMEL; this allows the loading of PMEL luminal fragment on ILVs to induce fibril nucleation. In terms of processing, APOE exists as multiple glycosylated and sialylated glycoforms within cells and in plasma. The extent of glycosylation and sialylation are tissue and context specific. Post-translationally, glycated in plasma VLDL. Phosphorylated by FAM20C in the extracellular medium.

It is found in the secreted. The protein resides in the extracellular space. It localises to the extracellular matrix. The protein localises to the extracellular vesicle. Its subcellular location is the endosome. It is found in the multivesicular body. In terms of biological role, APOE is an apolipoprotein, a protein associating with lipid particles, that mainly functions in lipoprotein-mediated lipid transport between organs via the plasma and interstitial fluids. APOE is a core component of plasma lipoproteins and is involved in their production, conversion and clearance. Apolipoproteins are amphipathic molecules that interact both with lipids of the lipoprotein particle core and the aqueous environment of the plasma. As such, APOE associates with chylomicrons, chylomicron remnants, very low density lipoproteins (VLDL) and intermediate density lipoproteins (IDL) but shows a preferential binding to high-density lipoproteins (HDL). It also binds a wide range of cellular receptors including the LDL receptor/LDLR, the LDL receptor-related proteins LRP1, LRP2 and LRP8 and the very low-density lipoprotein receptor/VLDLR that mediate the cellular uptake of the APOE-containing lipoprotein particles. Finally, APOE also has a heparin-binding activity and binds heparan-sulfate proteoglycans on the surface of cells, a property that supports the capture and the receptor-mediated uptake of APOE-containing lipoproteins by cells. A main function of APOE is to mediate lipoprotein clearance through the uptake of chylomicrons, VLDLs, and HDLs by hepatocytes. APOE is also involved in the biosynthesis by the liver of VLDLs as well as their uptake by peripheral tissues ensuring the delivery of triglycerides and energy storage in muscle, heart and adipose tissues. By participating in the lipoprotein-mediated distribution of lipids among tissues, APOE plays a critical role in plasma and tissues lipid homeostasis. APOE is also involved in two steps of reverse cholesterol transport, the HDLs-mediated transport of cholesterol from peripheral tissues to the liver, and thereby plays an important role in cholesterol homeostasis. First, it is functionally associated with ABCA1 in the biogenesis of HDLs in tissues. Second, it is enriched in circulating HDLs and mediates their uptake by hepatocytes. APOE also plays an important role in lipid transport in the central nervous system, regulating neuron survival and sprouting. This Mus pahari (Gairdner's shrew-mouse) protein is Apolipoprotein E (Apoe).